Reading from the N-terminus, the 1024-residue chain is Importin-8 (1024 aa).

The region spanning 22–102 (AENELNQSYK…RENMVEAIIR (81 aa)) is the Importin N-terminal domain. The disordered stretch occupies residues 896-969 (FGRAQGSEEE…YSTPLDCDNG (74 aa)). Composition is skewed to acidic residues over residues 902–917 (SEEE…EDEV) and 934–952 (DNED…DEGL).

Belongs to the importin beta family.

It is found in the cytoplasm. The protein resides in the nucleus. In terms of biological role, involved in nuclear protein import, either by acting as autonomous nuclear transport receptor or as an adapter-like protein in association with the importin-beta subunit KPNB1. Acting autonomously, may serve as receptor for nuclear localization signals (NLS) and promote translocation of import substrates through the nuclear pore complex (NPC) by an energy requiring, Ran-dependent mechanism. At the nucleoplasmic side of the NPC, Ran binds to importin, the importin/substrate complex dissociates and importin is re-exported from the nucleus to the cytoplasm where GTP hydrolysis releases Ran. The directionality of nuclear import is thought to be conferred by an asymmetric distribution of the GTP- and GDP-bound forms of Ran between the cytoplasm and nucleus. In vitro mediates the nuclear import of the signal recognition particle protein SRP19. May also be involved in cytoplasm-to-nucleus shuttling of a broad spectrum of other cargos, including Argonaute-microRNAs complexes, the JUN protein, RELA/NF-kappa-B p65 subunit, the translation initiation factor EIF4E and a set of receptor-activated mothers against decapentaplegic homolog (SMAD) transcription factors that play a critical role downstream of the large family of transforming growth factor beta and bone morphogenetic protein (BMP) cytokines. The sequence is that of Importin-8 (ipo8) from Danio rerio (Zebrafish).